The following is a 209-amino-acid chain: Large ribosomal subunit protein uL3 (209 aa).

N5-methylglutamine is present on Q150.

This sequence belongs to the universal ribosomal protein uL3 family. As to quaternary structure, part of the 50S ribosomal subunit. Forms a cluster with proteins L14 and L19. In terms of processing, methylated by PrmB.

Its function is as follows. One of the primary rRNA binding proteins, it binds directly near the 3'-end of the 23S rRNA, where it nucleates assembly of the 50S subunit. In Citrobacter koseri (strain ATCC BAA-895 / CDC 4225-83 / SGSC4696), this protein is Large ribosomal subunit protein uL3.